Reading from the N-terminus, the 380-residue chain is Alpha-N-acetylneuraminate alpha-2,8-sialyltransferase ST8SIA3 (380 aa).

Over 1–17 (MRNCKMARVASVLGLVM) the chain is Cytoplasmic. A helical; Signal-anchor for type II membrane protein membrane pass occupies residues 18–33 (LSVALLILSLISYVSL). The Lumenal segment spans residues 34–380 (KKENIFTTPK…LTKLTLSHCA (347 aa)). Residues asparagine 93 and asparagine 113 are each glycosylated (N-linked (GlcNAc...) asparagine). Intrachain disulfides connect cysteine 162–cysteine 313 and cysteine 176–cysteine 379. Positions 167 and 190 each coordinate CMP-N-acetyl-beta-neuraminate. The N-linked (GlcNAc...) asparagine glycan is linked to asparagine 206. The CMP-N-acetyl-beta-neuraminate site is built by serine 300, threonine 301, glycine 302, tryptophan 322, tyrosine 336, and histidine 337. The active-site Proton donor/acceptor is the histidine 354.

Belongs to the glycosyltransferase 29 family. Homodimer. In terms of tissue distribution, expressed in neurons in brain with higher expression in the striatum than in the hippocampus, cortex, and cerebellum (at protein level). Expressed in testes.

Its subcellular location is the golgi apparatus membrane. The catalysed reaction is a ganglioside GM3 (d18:1(4E)) + CMP-N-acetyl-beta-neuraminate = a ganglioside GD3 (d18:1(4E)) + CMP + H(+). It carries out the reaction a ganglioside GM3 + CMP-N-acetyl-beta-neuraminate = a ganglioside GD3 + CMP + H(+). The enzyme catalyses an N-acetyl-alpha-neuraminyl-(2-&gt;3)-beta-D-galactosyl derivative + CMP-N-acetyl-beta-neuraminate = an N-acetyl-alpha-neuraminyl-(2-&gt;8)-N-acetyl-alpha-neuraminyl-(2-&gt;3)-beta-D-galactosyl derivative + CMP + H(+). It catalyses the reaction an N-acetyl-alpha-neuraminyl-(2-&gt;3)-beta-D-galactosyl-(1-&gt;4)-N-acetyl-beta-D-glucosaminyl derivative + CMP-N-acetyl-beta-neuraminate = an alpha-Neu5Ac-(2-&gt;8)-alpha-Neu5Ac-(2-&gt;3)-beta-D-Gal-(1-&gt;4)-beta-D-GlcNAc derivative + CMP + H(+). Its pathway is protein modification; protein glycosylation. Catalyzes the transfer of sialic acid from a CMP-linked sialic acid donor onto a terminal alpha-2,3-, alpha-2,6-, or alpha-2,8-linked sialic acid of an acceptor, such as N-linked oligosaccharides of glycoproteins and glycolipids through alpha-2,8-linkages. Forms oligosialic and polysialic acid on various sialylated N-acetyllactosamine oligosaccharides of glycoproteins, including FETUB N-glycans, a2-HS-glycoprotein (AHSG) and alpha 2,3-sialylated glycosphingolipids, such as alpha 2,3-sialylparagloboside and ganglioside GM3 and to a lesser extent NCAM1 N-glycans. However, it is much more specific to N-linked oligosaccharides of glycoproteins than glycosphingolipids. 2,3-sialylparagloboside served as the best acceptor substrate among the glycolipids. alpha-Neu5Ac-(2-&gt;8)-alpha-Neu5Ac-(2-&gt;3)-beta-D-Gal-(1-&gt;4)-6S-D-GlcNAc and monosialyl and disialyl N-acetyllactosamines are the best acceptor substrates among glycoproteins. May play critical role in the striatum by mediating the formation of disialylated and trisialylated terminal glycotopes on N- and O-glycans of specific striatal proteins, regulating their distribution in lipid rafts, affecting their interaction with other binding partners, and subsequently modulating striatal functions. This Mus musculus (Mouse) protein is Alpha-N-acetylneuraminate alpha-2,8-sialyltransferase ST8SIA3.